A 389-amino-acid chain; its full sequence is Chalcone synthase 4 (389 aa).

Cysteine 164 is an active-site residue.

It belongs to the thiolase-like superfamily. Chalcone/stilbene synthases family.

It carries out the reaction (E)-4-coumaroyl-CoA + 3 malonyl-CoA + 3 H(+) = 2',4,4',6'-tetrahydroxychalcone + 3 CO2 + 4 CoA. Its pathway is secondary metabolite biosynthesis; flavonoid biosynthesis. Its function is as follows. The primary product of this enzyme is 4,2',4',6'-tetrahydroxychalcone (also termed naringenin-chalcone or chalcone) which can under specific conditions spontaneously isomerize into naringenin. This Pisum sativum (Garden pea) protein is Chalcone synthase 4 (CHS4).